An 83-amino-acid chain; its full sequence is ATP synthase subunit c, chloroplastic (83 aa).

2 helical membrane passes run 3-23 and 57-77; these read PLIA…AAIG and FAFM…LLFA.

This sequence belongs to the ATPase C chain family. As to quaternary structure, F-type ATPases have 2 components, F(1) - the catalytic core - and F(0) - the membrane proton channel. F(1) has five subunits: alpha(3), beta(3), gamma(1), delta(1), epsilon(1). F(0) has four main subunits: a(1), b(1), b'(1) and c(10-14). The alpha and beta chains form an alternating ring which encloses part of the gamma chain. F(1) is attached to F(0) by a central stalk formed by the gamma and epsilon chains, while a peripheral stalk is formed by the delta, b and b' chains.

The protein resides in the plastid. It is found in the chloroplast thylakoid membrane. In terms of biological role, f(1)F(0) ATP synthase produces ATP from ADP in the presence of a proton or sodium gradient. F-type ATPases consist of two structural domains, F(1) containing the extramembraneous catalytic core and F(0) containing the membrane proton channel, linked together by a central stalk and a peripheral stalk. During catalysis, ATP synthesis in the catalytic domain of F(1) is coupled via a rotary mechanism of the central stalk subunits to proton translocation. Functionally, key component of the F(0) channel; it plays a direct role in translocation across the membrane. A homomeric c-ring of between 10-14 subunits forms the central stalk rotor element with the F(1) delta and epsilon subunits. This chain is ATP synthase subunit c, chloroplastic, found in Oedogonium cardiacum (Filamentous green alga).